The sequence spans 365 residues: Heme A synthase (365 aa).

Transmembrane regions (helical) follow at residues 17–37 (AVRIWLTVVAALIAVMVLVGG), 107–127 (VIGIAYLLPFLWFLWRGAIGP), 132–152 (ALWGIFALGALQGAVGWWMVA), 164–184 (VRLAVHLTLALIIYAAIVWTL), 203–223 (AIALLALTLLQLFLGALVAGL), 264–283 (QFDHRMMAYALWALAAWHAI), 296–316 (GALWLFAALSLQAVLGILTVL), and 320–340 (PIGLALAHQAVGIVVLTLAVL). A heme-binding site is contributed by H267. Heme is bound at residue H327.

The protein belongs to the COX15/CtaA family. Type 2 subfamily. Interacts with CtaB. Heme b serves as cofactor.

The protein resides in the cell membrane. It catalyses the reaction Fe(II)-heme o + 2 A + H2O = Fe(II)-heme a + 2 AH2. It functions in the pathway porphyrin-containing compound metabolism; heme A biosynthesis; heme A from heme O: step 1/1. Functionally, catalyzes the conversion of heme O to heme A by two successive hydroxylations of the methyl group at C8. The first hydroxylation forms heme I, the second hydroxylation results in an unstable dihydroxymethyl group, which spontaneously dehydrates, resulting in the formyl group of heme A. The chain is Heme A synthase from Rhodopseudomonas palustris (strain HaA2).